Consider the following 254-residue polypeptide: Stem 28 kDa glycoprotein (254 aa).

The signal sequence occupies residues 1 to 21; it reads MKMKVLVFFVATILVAWQCHA. A propeptide spanning residues 22 to 34 is cleaved from the precursor; it reads YDMFPLRMNTGYG. An N-linked (GlcNAc...) asparagine glycan is attached at Asn-129.

It belongs to the APS1/VSP family. In terms of tissue distribution, accumulates in the stems of developing soybean seedlings.

Functionally, may function as somatic storage protein during early seedling development. This is Stem 28 kDa glycoprotein (VSPA) from Glycine max (Soybean).